Reading from the N-terminus, the 347-residue chain is tRNA pseudouridine synthase D (347 aa).

Asp81 (nucleophile) is an active-site residue. One can recognise a TRUD domain in the interval 158–305 (GVPNYFGSQR…RHDRREIALK (148 aa)).

It belongs to the pseudouridine synthase TruD family.

The catalysed reaction is uridine(13) in tRNA = pseudouridine(13) in tRNA. In terms of biological role, responsible for synthesis of pseudouridine from uracil-13 in transfer RNAs. This Vibrio parahaemolyticus serotype O3:K6 (strain RIMD 2210633) protein is tRNA pseudouridine synthase D.